Reading from the N-terminus, the 1553-residue chain is Mediator of RNA polymerase II transcription subunit 14 (1553 aa).

Short sequence motifs (LXXLL motif) lie at residues Leu-55–Leu-59 and Leu-472–Leu-476. A Phosphoserine modification is found at Ser-615. Disordered regions lie at residues Phe-699–Gly-723, Ala-1006–Pro-1199, and Gly-1513–Gln-1553. Residue Ser-1015 is modified to Phosphoserine. Composition is skewed to low complexity over residues Gly-1024–Pro-1039 and Pro-1065–Ala-1080. The span at Gly-1081–Gly-1090 shows a compositional bias: gly residues. Residues Pro-1099–Ser-1108 show a composition bias toward pro residues. Residues Gly-1131–Trp-1155 are compositionally biased toward polar residues. The segment covering Pro-1159–Gly-1169 has biased composition (pro residues). Positions Thr-1177–Arg-1193 are enriched in gly residues. Residues Gly-1515 to Gln-1534 show a composition bias toward low complexity.

It belongs to the Mediator complex subunit 14 family. Component of the Mediator complex, which may include CDK8, MED4, MED6, MED11, MED14, MED17, MED18, MED20, MED21, MED22, MED27, MED28, MED30 and MED31.

It localises to the nucleus. Its function is as follows. Component of the Mediator complex, a coactivator involved in the regulated transcription of nearly all RNA polymerase II-dependent genes. Mediator functions as a bridge to convey information from gene-specific regulatory proteins to the basal RNA polymerase II transcription machinery. Mediator is recruited to promoters by direct interactions with regulatory proteins and serves as a scaffold for the assembly of a functional pre-initiation complex with RNA polymerase II and the general transcription factors. Required for activated transcription of the MtnA, MtnB and MtnD genes. This Drosophila melanogaster (Fruit fly) protein is Mediator of RNA polymerase II transcription subunit 14 (MED14).